A 366-amino-acid polypeptide reads, in one-letter code: tRNA/tmRNA (uracil-C(5))-methyltransferase (366 aa).

Residues glutamine 190, tyrosine 218, asparagine 223, glutamate 239, and aspartate 299 each contribute to the S-adenosyl-L-methionine site. Cysteine 324 functions as the Nucleophile in the catalytic mechanism. Glutamate 358 (proton acceptor) is an active-site residue.

The protein belongs to the class I-like SAM-binding methyltransferase superfamily. RNA M5U methyltransferase family. TrmA subfamily.

The enzyme catalyses uridine(54) in tRNA + S-adenosyl-L-methionine = 5-methyluridine(54) in tRNA + S-adenosyl-L-homocysteine + H(+). It carries out the reaction uridine(341) in tmRNA + S-adenosyl-L-methionine = 5-methyluridine(341) in tmRNA + S-adenosyl-L-homocysteine + H(+). In terms of biological role, dual-specificity methyltransferase that catalyzes the formation of 5-methyluridine at position 54 (m5U54) in all tRNAs, and that of position 341 (m5U341) in tmRNA (transfer-mRNA). This Shigella dysenteriae serotype 1 (strain Sd197) protein is tRNA/tmRNA (uracil-C(5))-methyltransferase.